Reading from the N-terminus, the 127-residue chain is Glycine cleavage system H protein (127 aa).

The region spanning 22-103 (EAYIGITDFA…AFANWIIKVE (82 aa)) is the Lipoyl-binding domain. Residue K63 is modified to N6-lipoyllysine.

Belongs to the GcvH family. As to quaternary structure, the glycine cleavage system is composed of four proteins: P, T, L and H. The cofactor is (R)-lipoate.

In terms of biological role, the glycine cleavage system catalyzes the degradation of glycine. The H protein shuttles the methylamine group of glycine from the P protein to the T protein. The polypeptide is Glycine cleavage system H protein (Alkaliphilus oremlandii (strain OhILAs) (Clostridium oremlandii (strain OhILAs))).